Here is a 393-residue protein sequence, read N- to C-terminus: Phosphoenolpyruvate/phosphate translocator 3, chloroplastic (393 aa).

The N-terminal 65 residues, 1–65 (MQRAAAASRA…LSGGRAVTAR (65 aa)), are a transit peptide targeting the chloroplast. A run of 7 helical transmembrane segments spans residues 89–109 (LAETAQLGAMIVAWYLLNIYF), 124–144 (YTITAFQLAFGSFVIFLMWAL), 164–183 (AAGHMLGTVFTNMSLSKVAV), 195–217 (FFTVLLSAFFLGETPSLLVLGSL), 232–249 (LSFNWIGFWSAMASNLLY), 270–290 (INLFSILTILSFLLSLPLMLF), and 362–382 (TPISPVNALGTGVALGGVFLY). An EamA domain is found at 123–228 (PYTITAFQLA…PIVGGVALAS (106 aa)).

The protein belongs to the TPT transporter family. PPT (TC 2.A.7.9) subfamily.

It is found in the plastid. Its subcellular location is the chloroplast membrane. In terms of biological role, phosphoenolpyruvate/phosphate translocator that transports phosphoenolpyruvate (PEP) and dihydroxyacetone phosphate. In Oryza sativa subsp. japonica (Rice), this protein is Phosphoenolpyruvate/phosphate translocator 3, chloroplastic (PPT3).